The following is a 131-amino-acid chain: UPF0292 protein PF1724 (131 aa).

The Toprim domain maps to 20-103; the sequence is KGVIIVEGKR…ETRRELQFIA (84 aa). Residues E26, D69, and D71 each contribute to the Mg(2+) site.

It belongs to the UPF0292 family. It depends on Mg(2+) as a cofactor.

In Pyrococcus furiosus (strain ATCC 43587 / DSM 3638 / JCM 8422 / Vc1), this protein is UPF0292 protein PF1724.